The chain runs to 144 residues: Eukaryotic translation initiation factor 1A (144 aa).

Basic residues predominate over residues 1–15 (MPKNKGKGGKNRKRG). 2 disordered regions span residues 1 to 25 (MPKN…DKRE) and 120 to 144 (DVDG…IDKI). Over residues 16–25 (KNEADDDKRE) the composition is skewed to basic and acidic residues. The S1-like domain occupies 22 to 96 (DKRELVFKED…DKADVILKYM (75 aa)).

This sequence belongs to the eIF-1A family.

Functionally, seems to be required for maximal rate of protein biosynthesis. Enhances ribosome dissociation into subunits and stabilizes the binding of the initiator Met-tRNA(I) to 40 S ribosomal subunits. The protein is Eukaryotic translation initiation factor 1A of Triticum aestivum (Wheat).